A 267-amino-acid polypeptide reads, in one-letter code: Putative hydro-lyase RALTA_B1245 (267 aa).

The protein belongs to the D-glutamate cyclase family.

In Cupriavidus taiwanensis (strain DSM 17343 / BCRC 17206 / CCUG 44338 / CIP 107171 / LMG 19424 / R1) (Ralstonia taiwanensis (strain LMG 19424)), this protein is Putative hydro-lyase RALTA_B1245.